A 1370-amino-acid chain; its full sequence is DNA-directed RNA polymerase subunit beta (1370 aa).

Belongs to the RNA polymerase beta chain family. As to quaternary structure, the RNAP catalytic core consists of 2 alpha, 1 beta, 1 beta' and 1 omega subunit. When a sigma factor is associated with the core the holoenzyme is formed, which can initiate transcription.

The enzyme catalyses RNA(n) + a ribonucleoside 5'-triphosphate = RNA(n+1) + diphosphate. Its function is as follows. DNA-dependent RNA polymerase catalyzes the transcription of DNA into RNA using the four ribonucleoside triphosphates as substrates. The sequence is that of DNA-directed RNA polymerase subunit beta from Verminephrobacter eiseniae (strain EF01-2).